The following is a 403-amino-acid chain: S-adenosylmethionine synthase (403 aa).

H15 lines the ATP pocket. D17 provides a ligand contact to Mg(2+). E43 serves as a coordination point for K(+). 2 residues coordinate L-methionine: E56 and Q99. A flexible loop region spans residues Q99–R109. ATP is bound by residues D166–K168, K232–F233, D241, R247–K248, A264, and K268. D241 serves as a coordination point for L-methionine. K272 contacts L-methionine.

This sequence belongs to the AdoMet synthase family. Homotetramer; dimer of dimers. Mg(2+) is required as a cofactor. Requires K(+) as cofactor.

It is found in the cytoplasm. The catalysed reaction is L-methionine + ATP + H2O = S-adenosyl-L-methionine + phosphate + diphosphate. It participates in amino-acid biosynthesis; S-adenosyl-L-methionine biosynthesis; S-adenosyl-L-methionine from L-methionine: step 1/1. Its function is as follows. Catalyzes the formation of S-adenosylmethionine (AdoMet) from methionine and ATP. The overall synthetic reaction is composed of two sequential steps, AdoMet formation and the subsequent tripolyphosphate hydrolysis which occurs prior to release of AdoMet from the enzyme. The polypeptide is S-adenosylmethionine synthase (Xanthomonas campestris pv. campestris (strain ATCC 33913 / DSM 3586 / NCPPB 528 / LMG 568 / P 25)).